Consider the following 147-residue polypeptide: Hemoglobin subunit gamma (147 aa).

Positions 3–147 (HFTAEEKAAI…VATALAHKYH (145 aa)) constitute a Globin domain. Positions 64 and 93 each coordinate heme b.

It belongs to the globin family. In terms of assembly, heterotetramer of two alpha chains and two gamma chains. In terms of tissue distribution, red blood cells.

Functionally, this protein functions as an embryonic globin, but the gene structure and chromosomal location resemble more closely the human gamma chain gene, which codes for a fetal globin. In Oryctolagus cuniculus (Rabbit), this protein is Hemoglobin subunit gamma (HBG).